The primary structure comprises 191 residues: Thymidylate kinase (191 aa).

Position 7–14 (7–14 (GIDTAGKS)) interacts with ATP.

The protein belongs to the thymidylate kinase family.

The enzyme catalyses dTMP + ATP = dTDP + ADP. Phosphorylation of dTMP to form dTDP in both de novo and salvage pathways of dTTP synthesis. In Sulfurimonas denitrificans (strain ATCC 33889 / DSM 1251) (Thiomicrospira denitrificans (strain ATCC 33889 / DSM 1251)), this protein is Thymidylate kinase.